Consider the following 105-residue polypeptide: uncharacterized protein (105 aa).

This is an uncharacterized protein from Acidianus bottle-shaped virus (isolate Italy/Pozzuoli) (ABV).